A 469-amino-acid polypeptide reads, in one-letter code: Adenosylhomocysteinase (469 aa).

Residues Thr63, Asp139, and Glu164 each coordinate substrate. 165–167 contributes to the NAD(+) binding site; it reads TTT. Positions 194 and 198 each coordinate substrate. Residues Asn199, 228–233, Glu251, Asn300, 321–323, and Asn375 contribute to the NAD(+) site; these read GYGDVG and IGH.

This sequence belongs to the adenosylhomocysteinase family. It depends on NAD(+) as a cofactor.

The protein localises to the cytoplasm. The catalysed reaction is S-adenosyl-L-homocysteine + H2O = L-homocysteine + adenosine. Its pathway is amino-acid biosynthesis; L-homocysteine biosynthesis; L-homocysteine from S-adenosyl-L-homocysteine: step 1/1. In terms of biological role, may play a key role in the regulation of the intracellular concentration of adenosylhomocysteine. This Pseudomonas syringae pv. tomato (strain ATCC BAA-871 / DC3000) protein is Adenosylhomocysteinase.